The sequence spans 401 residues: Elongation factor Tu (401 aa).

The 202-residue stretch at Lys-10–Lys-211 folds into the tr-type G domain. A G1 region spans residues Gly-19–Thr-26. Residue Gly-19–Thr-26 participates in GTP binding. Position 26 (Thr-26) interacts with Mg(2+). The segment at Gly-62–Ala-66 is G2. The tract at residues Asp-83–Gly-86 is G3. Residues Asp-83–His-87 and Asn-138–Asp-141 contribute to the GTP site. Residues Asn-138 to Asp-141 are G4. Residues Ser-179–Val-181 are G5.

This sequence belongs to the TRAFAC class translation factor GTPase superfamily. Classic translation factor GTPase family. EF-Tu/EF-1A subfamily. In terms of assembly, monomer.

It localises to the cytoplasm. It catalyses the reaction GTP + H2O = GDP + phosphate + H(+). In terms of biological role, GTP hydrolase that promotes the GTP-dependent binding of aminoacyl-tRNA to the A-site of ribosomes during protein biosynthesis. The protein is Elongation factor Tu of Leptospira borgpetersenii serovar Hardjo-bovis (strain JB197).